The chain runs to 107 residues: Thioredoxin (107 aa).

The region spanning 2-107 (SVSQVTDASF…LASTLNKYIS (106 aa)) is the Thioredoxin domain. Active-site nucleophile residues include Cys-31 and Cys-34. Cys-31 and Cys-34 are disulfide-bonded.

This sequence belongs to the thioredoxin family.

The protein localises to the plastid. It localises to the chloroplast. Its function is as follows. Participates in various redox reactions through the reversible oxidation of its active center dithiol to a disulfide and catalyzes dithiol-disulfide exchange reactions. This chain is Thioredoxin (trxA), found in Pyropia yezoensis (Susabi-nori).